The following is a 238-amino-acid chain: Formate dehydrogenase, cytochrome b556 subunit (238 aa).

2 residues coordinate heme b: His23 and His62. The next 4 helical transmembrane spans lie at 23–43 (HWML…FFFP), 60–80 (AIHP…ALLY), 120–140 (MLFW…IIMW), and 155–175 (IAIL…LVHI). Residues His160 and His174 each coordinate heme b.

This sequence belongs to the formate dehydrogenase gamma subunit family. In terms of assembly, formate dehydrogenase is a membrane-bound complex, formed by subunits alpha, beta and gamma. It depends on heme as a cofactor.

The protein resides in the cell membrane. Functionally, allows to use formate as major electron donor during anaerobic respiration. Subunit gamma is probably the cytochrome b556(FDO) component of the formate dehydrogenase. The protein is Formate dehydrogenase, cytochrome b556 subunit (fdxI) of Haemophilus influenzae (strain ATCC 51907 / DSM 11121 / KW20 / Rd).